A 334-amino-acid polypeptide reads, in one-letter code: Holliday junction branch migration complex subunit RuvB (334 aa).

Positions 4–184 are large ATPase domain (RuvB-L); that stretch reads ADRIISASPQ…FGIVQRLEFY (181 aa). ATP is bound by residues I23, R24, G65, K68, T69, T70, 131-133, R174, Y184, and R221; that span reads EDY. T69 serves as a coordination point for Mg(2+). Residues 185–255 form a small ATPAse domain (RuvB-S) region; sequence NVDDLTSIVK…IAKQALVMLD (71 aa). The interval 258–334 is head domain (RuvB-H); the sequence is PQGFDFMDIK…YAHLGISLSE (77 aa). 3 residues coordinate DNA: R294, R313, and R318.

Belongs to the RuvB family. Homohexamer. Forms an RuvA(8)-RuvB(12)-Holliday junction (HJ) complex. HJ DNA is sandwiched between 2 RuvA tetramers; dsDNA enters through RuvA and exits via RuvB. An RuvB hexamer assembles on each DNA strand where it exits the tetramer. Each RuvB hexamer is contacted by two RuvA subunits (via domain III) on 2 adjacent RuvB subunits; this complex drives branch migration. In the full resolvosome a probable DNA-RuvA(4)-RuvB(12)-RuvC(2) complex forms which resolves the HJ.

It localises to the cytoplasm. The catalysed reaction is ATP + H2O = ADP + phosphate + H(+). Its function is as follows. The RuvA-RuvB-RuvC complex processes Holliday junction (HJ) DNA during genetic recombination and DNA repair, while the RuvA-RuvB complex plays an important role in the rescue of blocked DNA replication forks via replication fork reversal (RFR). RuvA specifically binds to HJ cruciform DNA, conferring on it an open structure. The RuvB hexamer acts as an ATP-dependent pump, pulling dsDNA into and through the RuvAB complex. RuvB forms 2 homohexamers on either side of HJ DNA bound by 1 or 2 RuvA tetramers; 4 subunits per hexamer contact DNA at a time. Coordinated motions by a converter formed by DNA-disengaged RuvB subunits stimulates ATP hydrolysis and nucleotide exchange. Immobilization of the converter enables RuvB to convert the ATP-contained energy into a lever motion, pulling 2 nucleotides of DNA out of the RuvA tetramer per ATP hydrolyzed, thus driving DNA branch migration. The RuvB motors rotate together with the DNA substrate, which together with the progressing nucleotide cycle form the mechanistic basis for DNA recombination by continuous HJ branch migration. Branch migration allows RuvC to scan DNA until it finds its consensus sequence, where it cleaves and resolves cruciform DNA. This Haemophilus ducreyi (strain 35000HP / ATCC 700724) protein is Holliday junction branch migration complex subunit RuvB.